Consider the following 277-residue polypeptide: Insulin-induced gene 1 protein (277 aa).

Residues 1–84 (MPRLHDHFWS…PYPNTWHHRL (84 aa)) lie on the Cytoplasmic side of the membrane. Residues 51–66 (HGAPDADPAPRGRSAA) are compositionally biased toward low complexity. Residues 51 to 73 (HGAPDADPAPRGRSAAMSGPEPG) are disordered. Residues 85-107 (LQRSLVLFSVGVVLALVLNLLQI) traverse the membrane as a helical segment. At 108-126 (QRNVTLFPEEVIATIFSSA) the chain is on the lumenal side. A helical transmembrane segment spans residues 127 to 144 (WWVPPCCGTAAAVVGLLY). Residues 145 to 159 (PCIDSHLGEPHKFKR) are Cytoplasmic-facing. Residues Lys156 and Lys158 each participate in a glycyl lysine isopeptide (Lys-Gly) (interchain with G-Cter in ubiquitin) cross-link. Residues 160–182 (EWASVMRCIAVFVGINHASAKLD) form a helical membrane-spanning segment. The Lumenal portion of the chain corresponds to 183–185 (FAN). A helical transmembrane segment spans residues 186–204 (NVQLSLTLAALSLGLWWTF). The Cytoplasmic segment spans residues 205-209 (DRSRS). Ser207 is modified (phosphoserine; by PCK1). A helical transmembrane segment spans residues 210 to 231 (GLGLGITIAFLATLITQFLVYN). The Lumenal portion of the chain corresponds to 232–245 (GVYQYTSPDFLYIR). A helical transmembrane segment spans residues 246 to 263 (SWLPCIFFSGGVTVGNIG). Topologically, residues 264-277 (RQLAMGVPEKPHSD) are cytoplasmic. Positions 271 to 277 (PEKPHSD) match the KxHxx motif.

It belongs to the INSIG family. In terms of assembly, interacts with SCAP; interaction is direct and only takes place in the presence of sterols; it prevents interaction between SCAP and the coat protein complex II (COPII). Associates with the SCAP-SREBP complex (composed of SCAP and SREBF1/SREBP1 or SREBF2/SREBP2); association is mediated via its interaction with SCAP and only takes place in the presence of sterols. Interaction with SCAP is mutually exclusive with PAQR3. Interacts with HMGCR (via its SSD); the interaction, accelerated by sterols, leads to the recruitment of HMGCR to AMFR/gp78 for its ubiquitination by the sterol-mediated ERAD pathway. Interacts with AMFR/gp78 (via its membrane domain); the interaction recruits HMCR at the ER membrane for its ubiquitination and degradation by the sterol-mediated ERAD pathway. Interacts with SOAT2/ACAT2; leading to promote recruitment of AMFR/gp78 and subsequent ubiquitination of SOAT2/ACAT2. Interacts with RNF139. Interacts with RNF145. In terms of processing, phosphorylation at Ser-207 by PCK1 reduces binding to oxysterol, disrupting the interaction between INSIG1 and SCAP, thereby promoting nuclear translocation of SREBP proteins (SREBF1/SREBP1 or SREBF2/SREBP2) and subsequent transcription of downstream lipogenesis-related genes. Ubiquitinated by AMFR/gp78 in response to sterol deprivation, leading to its degradation: when the SCAP-SREBP complex becomes dissociated from INSIG1, INSIG1 is then ubiquitinated and degraded in proteasomes. Although ubiquitination is required for rapid INSIG1 degradation, it is not required for release of the SCAP-SREBP complex. Ubiquitinated by RNF139. As to expression, expressed in all tissues tested with highest expression in the liver.

The protein resides in the endoplasmic reticulum membrane. Functionally, oxysterol-binding protein that mediates feedback control of cholesterol synthesis by controlling both endoplasmic reticulum to Golgi transport of SCAP and degradation of HMGCR. Acts as a negative regulator of cholesterol biosynthesis by mediating the retention of the SCAP-SREBP complex in the endoplasmic reticulum, thereby blocking the processing of sterol regulatory element-binding proteins (SREBPs) SREBF1/SREBP1 and SREBF2/SREBP2. Binds oxysterol, including 25-hydroxycholesterol, regulating interaction with SCAP and retention of the SCAP-SREBP complex in the endoplasmic reticulum. In presence of oxysterol, interacts with SCAP, retaining the SCAP-SREBP complex in the endoplasmic reticulum, thereby preventing SCAP from escorting SREBF1/SREBP1 and SREBF2/SREBP2 to the Golgi. Sterol deprivation or phosphorylation by PCK1 reduce oxysterol-binding, disrupting the interaction between INSIG1 and SCAP, thereby promoting Golgi transport of the SCAP-SREBP complex, followed by processing and nuclear translocation of SREBF1/SREBP1 and SREBF2/SREBP2. Also regulates cholesterol synthesis by regulating degradation of HMGCR: initiates the sterol-mediated ubiquitin-mediated endoplasmic reticulum-associated degradation (ERAD) of HMGCR via recruitment of the reductase to the ubiquitin ligases AMFR/gp78 and/or RNF139. Also regulates degradation of SOAT2/ACAT2 when the lipid levels are low: initiates the ubiquitin-mediated degradation of SOAT2/ACAT2 via recruitment of the ubiquitin ligases AMFR/gp78. The sequence is that of Insulin-induced gene 1 protein from Homo sapiens (Human).